Here is an 80-residue protein sequence, read N- to C-terminus: Metallothionein-like protein type 2, MT2-28 (80 aa).

It belongs to the metallothionein superfamily. Type 15 family.

Functionally, metallothioneins have a high content of cysteine residues that bind various heavy metals. The chain is Metallothionein-like protein type 2, MT2-28 from Brassica juncea (Indian mustard).